We begin with the raw amino-acid sequence, 377 residues long: Nitric oxide reductase FlRd-NAD(+) reductase (377 aa).

The protein belongs to the FAD-dependent oxidoreductase family. Requires FAD as cofactor.

The protein resides in the cytoplasm. The enzyme catalyses 2 reduced [nitric oxide reductase rubredoxin domain] + NAD(+) + H(+) = 2 oxidized [nitric oxide reductase rubredoxin domain] + NADH. It participates in nitrogen metabolism; nitric oxide reduction. One of at least two accessory proteins for anaerobic nitric oxide (NO) reductase. Reduces the rubredoxin moiety of NO reductase. This chain is Nitric oxide reductase FlRd-NAD(+) reductase, found in Escherichia coli (strain K12 / MC4100 / BW2952).